A 204-amino-acid chain; its full sequence is Large ribosomal subunit protein eL15 (204 aa).

Residue Gly2 is the site of N-myristoyl glycine attachment. Ser34 bears the Phosphoserine mark. Residue Lys83 forms a Glycyl lysine isopeptide (Lys-Gly) (interchain with G-Cter in SUMO2) linkage. Ser97 and Ser100 each carry phosphoserine. The interval 165 to 186 (TSAGRKSRGLGKGHKFHHTIGG) is disordered. Positions 169 to 182 (RKSRGLGKGHKFHH) are enriched in basic residues.

Belongs to the eukaryotic ribosomal protein eL15 family. Component of the large ribosomal subunit. Interacts with IFIT1 (via TPR repeats 1-4).

It is found in the cytoplasm. Functionally, component of the large ribosomal subunit. The ribosome is a large ribonucleoprotein complex responsible for the synthesis of proteins in the cell. This is Large ribosomal subunit protein eL15 (RPL15) from Bos taurus (Bovine).